We begin with the raw amino-acid sequence, 243 residues long: ADP-ribosylation factor-like protein 10 (243 aa).

GTP contacts are provided by residues 83-90 (GLDGSGKS), 127-131 (EIGGS), and 184-187 (NKQD).

This sequence belongs to the small GTPase superfamily. Arf family.

This chain is ADP-ribosylation factor-like protein 10 (Arl10), found in Mus musculus (Mouse).